We begin with the raw amino-acid sequence, 1211 residues long: MVDVNRFKSMQITLASPSKVRSWSYGEVKKPETINYRTLKPEREGLFDEVIFGPTKDWECACGKYKRIRYKGIVCDRCGVEVTRAKVRRERMGHIELKAPVSHIWYFKGIPSRMGLTLDMSPRALEEVIYFAAYVVIDPKDTPLEPKSLLTEREYREKIQEYGHGSFIAKMGAEAIQDLLKRVDLVTEIAELKEELKTATGQKRIKAVRRLDVLDAFNKSGNKPEWMILNILPVIPPDLRPMVQLDGGRFAASDLNDLYRRVINRNNRLARLLELNAPGIIVQNEKRMLQEAVDALIDNGRRGRPITGPGSRPLKSLSHMLKGKQGRFRQNLLGKRVDFSGRSVIAVGPTLKMYQCGVPREMAIELFKPFVMREIVAREFAGNVKAAKRMVERGDERIWDILEEVIKEHPVLLNRAPTLHRLGIQAFEPVLIDGKALRLHPLVCEAYNADFDGDQMAIHVPLSEEAQAEARLLMLAAEHILNPKDGKPVVTPSQDMVLGNYYLTMEDAGREGEGMIFKDKDEAVMAYRNGYVHLHSRVGIAVDSMPSKPWKDSQRHKIMVTTVGKILFNDIMPEDLPYLQEPNNANLTEGTPDKYFLEPGQNIQEVIDSLPINVPFKKKNLGNIIAETFKRFRTTETSAFLDRLKDLGYYHSTLAGLTVGIADIPVIDNKAEIIEAAHHRVEEINKAFRRGLMTDDDRYVAVTTTWREAKEALEKRLIETQDPKNPIVMMMDSGARGNISNFSQLAGMRGLMAAPNGRIMELPILSNFREGLSVLEMFFSTHGARKGMTDTALKTADSGYLTRRLVDVAQDVIIREDDCGTDRGLLIRAITDGKEVTETLEERLQGRYTRKSVKHPETGEVLIGADQLITEDMARKIVDAGVEEVTIRSVFTCATRHGVCRHCYGINLATGDAVEVGEAVGTIAAQSIGEPGTQLTMRTFHTGGVASNTDITQGLPRIQEIFEARNPKGEAVITEVKGTVIEIEEDASTRTKKVYVQGKTGMGEYVVPFTARMKVEVGDEVNRGAALTEGSIQPKHLLEVRDTLSVETYLLAEVQKVYRSQGVEIGDKHVEVMVRQMLRKVRVMDPGDTDLLPGTLMDIADFTDANKEIVISGGIPATSRPVLMGITKASLETNSFLSAASFQETTRVLTDAAIRGKKDHLLGLKENVIIGKIIPAGTGMVRYRNIEPQAINEVEVIEEAEATEEPAIIKE.

Zn(2+)-binding residues include Cys60, Cys62, Cys75, and Cys78. Asp450, Asp452, and Asp454 together coordinate Mg(2+). Cys819, Cys893, Cys900, and Cys903 together coordinate Zn(2+).

Belongs to the RNA polymerase beta' chain family. As to quaternary structure, the RNAP catalytic core consists of 2 alpha, 1 beta, 1 beta' and 1 omega subunit. When a sigma factor is associated with the core the holoenzyme is formed, which can initiate transcription. It depends on Mg(2+) as a cofactor. Zn(2+) serves as cofactor.

The catalysed reaction is RNA(n) + a ribonucleoside 5'-triphosphate = RNA(n+1) + diphosphate. Functionally, DNA-dependent RNA polymerase catalyzes the transcription of DNA into RNA using the four ribonucleoside triphosphates as substrates. In Streptococcus equi subsp. zooepidemicus (strain H70), this protein is DNA-directed RNA polymerase subunit beta'.